The following is a 556-amino-acid chain: (6-4)DNA photolyase (556 aa).

Residues 24–162 (SGSLIWFRKG…EVFSPVSHTL (139 aa)) form the Photolyase/cryptochrome alpha/beta domain. Phosphate is bound at residue E262. FAD is bound by residues K263, 276–280 (TTVMS), 317–321 (QLLWR), 380–383 (WMHH), R386, 415–417 (DSD), and N421. W320 serves as a coordination point for DNA. Residues 382-387 (HHLARH) form an interaction with DNA region. DNA is bound at residue W427. The interval 534 to 556 (LRRKLQKDEHEESKIRNQRPKLK) is disordered. Residues 539-548 (QKDEHEESKI) show a composition bias toward basic and acidic residues.

The protein belongs to the DNA photolyase class-1 family. FAD is required as a cofactor. In terms of tissue distribution, expressed in siliques, flowers and leaves. Not detected in roots.

It carries out the reaction (6-4) photoproduct (in DNA) = 2 pyrimidine residues (in DNA).. Functionally, involved in repair of UV radiation-induced DNA damage. Catalyzes the photoreactivation of pyrimidine [6-4] pyrimidone photoproduct (6-4 products). Binds specifically to DNA containing 6-4 products and repairs these lesions in a visible light-dependent manner. Not required for repair of cyclobutane pyrimidine dimer (CPD). This chain is (6-4)DNA photolyase (UVR3), found in Arabidopsis thaliana (Mouse-ear cress).